Consider the following 227-residue polypeptide: Orotate phosphoribosyltransferase (227 aa).

Lys26 contributes to the 5-phospho-alpha-D-ribose 1-diphosphate binding site. 34–35 serves as a coordination point for orotate; that stretch reads FF. Residues 72-73, Arg98, Lys99, Lys102, His104, and 123-131 each bind 5-phospho-alpha-D-ribose 1-diphosphate; these read YK and DDVVSAGLS. Orotate contacts are provided by Ser127 and Arg155.

It belongs to the purine/pyrimidine phosphoribosyltransferase family. PyrE subfamily. In terms of assembly, homodimer. It depends on Mg(2+) as a cofactor.

It carries out the reaction orotidine 5'-phosphate + diphosphate = orotate + 5-phospho-alpha-D-ribose 1-diphosphate. It participates in pyrimidine metabolism; UMP biosynthesis via de novo pathway; UMP from orotate: step 1/2. Functionally, catalyzes the transfer of a ribosyl phosphate group from 5-phosphoribose 1-diphosphate to orotate, leading to the formation of orotidine monophosphate (OMP). In Nitrosomonas europaea (strain ATCC 19718 / CIP 103999 / KCTC 2705 / NBRC 14298), this protein is Orotate phosphoribosyltransferase.